A 299-amino-acid polypeptide reads, in one-letter code: tRNA-cytidine(32) 2-sulfurtransferase (299 aa).

A PP-loop motif motif is present at residues 56 to 61 (SGGKDS). [4Fe-4S] cluster-binding residues include Cys131, Cys134, and Cys222.

Belongs to the TtcA family. In terms of assembly, homodimer. Requires Mg(2+) as cofactor. It depends on [4Fe-4S] cluster as a cofactor.

It is found in the cytoplasm. It catalyses the reaction cytidine(32) in tRNA + S-sulfanyl-L-cysteinyl-[cysteine desulfurase] + AH2 + ATP = 2-thiocytidine(32) in tRNA + L-cysteinyl-[cysteine desulfurase] + A + AMP + diphosphate + H(+). Its pathway is tRNA modification. In terms of biological role, catalyzes the ATP-dependent 2-thiolation of cytidine in position 32 of tRNA, to form 2-thiocytidine (s(2)C32). The sulfur atoms are provided by the cysteine/cysteine desulfurase (IscS) system. The protein is tRNA-cytidine(32) 2-sulfurtransferase of Xylella fastidiosa (strain M23).